Here is a 502-residue protein sequence, read N- to C-terminus: Maturase K (502 aa).

It belongs to the intron maturase 2 family. MatK subfamily.

It localises to the plastid. It is found in the chloroplast. Its function is as follows. Usually encoded in the trnK tRNA gene intron. Probably assists in splicing its own and other chloroplast group II introns. The sequence is that of Maturase K from Brassica oleracea (Wild cabbage).